The chain runs to 228 residues: LexA repressor (228 aa).

A DNA-binding region (H-T-H motif) is located at residues 26–46 (FDEMKDALDLRSKSGIHRLIT). Residues Ser-149 and Lys-187 each act as for autocatalytic cleavage activity in the active site.

Belongs to the peptidase S24 family. Homodimer.

The catalysed reaction is Hydrolysis of Ala-|-Gly bond in repressor LexA.. Represses a number of genes involved in the response to DNA damage (SOS response), including recA and lexA. Has been shown to bind to the direct repeat sequence 5'-GTT-N(7)-GTTC-3'. In the presence of single-stranded DNA, RecA interacts with LexA causing an autocatalytic cleavage which disrupts the DNA-binding part of LexA, leading to derepression of the SOS regulon and eventually DNA repair. This chain is LexA repressor, found in Cereibacter sphaeroides (strain ATCC 17023 / DSM 158 / JCM 6121 / CCUG 31486 / LMG 2827 / NBRC 12203 / NCIMB 8253 / ATH 2.4.1.) (Rhodobacter sphaeroides).